Consider the following 339-residue polypeptide: Serpentine receptor class gamma-7 (339 aa).

Transmembrane regions (helical) follow at residues Tyr30–Thr50, Trp65–Val85, Phe98–Tyr118, Ile152–Ile172, Leu200–Met220, Ser239–Phe259, and Phe268–Phe288. The segment at Pro319–Ala339 is disordered.

Belongs to the nematode receptor-like protein srg family.

The protein resides in the membrane. The polypeptide is Serpentine receptor class gamma-7 (srg-7) (Caenorhabditis elegans).